The primary structure comprises 805 residues: Phenylalanine--tRNA ligase beta subunit (805 aa).

A tRNA-binding domain is found at 40–162; it reads FKNPDYLQLG…NRDEFGDYLS (123 aa). A B5 domain is found at 412 to 486; sequence AFNRKIYLNF…KILDLNKIKE (75 aa). Residues D464, D470, E473, and E474 each coordinate Mg(2+).

Belongs to the phenylalanyl-tRNA synthetase beta subunit family. Type 1 subfamily. As to quaternary structure, tetramer of two alpha and two beta subunits. Mg(2+) serves as cofactor.

The protein resides in the cytoplasm. It carries out the reaction tRNA(Phe) + L-phenylalanine + ATP = L-phenylalanyl-tRNA(Phe) + AMP + diphosphate + H(+). This Mycoplasma pneumoniae (strain ATCC 29342 / M129 / Subtype 1) (Mycoplasmoides pneumoniae) protein is Phenylalanine--tRNA ligase beta subunit (pheT).